A 352-amino-acid chain; its full sequence is N-acetyl-gamma-glutamyl-phosphate reductase (352 aa).

The active site involves Cys-156.

It belongs to the NAGSA dehydrogenase family. Type 1 subfamily.

It localises to the cytoplasm. The catalysed reaction is N-acetyl-L-glutamate 5-semialdehyde + phosphate + NADP(+) = N-acetyl-L-glutamyl 5-phosphate + NADPH + H(+). Its pathway is amino-acid biosynthesis; L-arginine biosynthesis; N(2)-acetyl-L-ornithine from L-glutamate: step 3/4. In terms of biological role, catalyzes the NADPH-dependent reduction of N-acetyl-5-glutamyl phosphate to yield N-acetyl-L-glutamate 5-semialdehyde. This is N-acetyl-gamma-glutamyl-phosphate reductase from Rhodospirillum rubrum (strain ATCC 11170 / ATH 1.1.1 / DSM 467 / LMG 4362 / NCIMB 8255 / S1).